Consider the following 129-residue polypeptide: Phosphoribosyl-AMP cyclohydrolase (129 aa).

Mg(2+) is bound at residue aspartate 77. Cysteine 78 provides a ligand contact to Zn(2+). 2 residues coordinate Mg(2+): aspartate 79 and aspartate 81. Cysteine 94 and cysteine 101 together coordinate Zn(2+).

The protein belongs to the PRA-CH family. Homodimer. Requires Mg(2+) as cofactor. The cofactor is Zn(2+).

The protein resides in the cytoplasm. It catalyses the reaction 1-(5-phospho-beta-D-ribosyl)-5'-AMP + H2O = 1-(5-phospho-beta-D-ribosyl)-5-[(5-phospho-beta-D-ribosylamino)methylideneamino]imidazole-4-carboxamide. It functions in the pathway amino-acid biosynthesis; L-histidine biosynthesis; L-histidine from 5-phospho-alpha-D-ribose 1-diphosphate: step 3/9. Functionally, catalyzes the hydrolysis of the adenine ring of phosphoribosyl-AMP. This chain is Phosphoribosyl-AMP cyclohydrolase, found in Methanosphaera stadtmanae (strain ATCC 43021 / DSM 3091 / JCM 11832 / MCB-3).